A 413-amino-acid polypeptide reads, in one-letter code: Serine hydroxymethyltransferase (413 aa).

Residues L117 and 121 to 123 (GHL) contribute to the (6S)-5,6,7,8-tetrahydrofolate site. K226 carries the N6-(pyridoxal phosphate)lysine modification. (6S)-5,6,7,8-tetrahydrofolate contacts are provided by residues E239 and 349–351 (SPF).

The protein belongs to the SHMT family. Homodimer. It depends on pyridoxal 5'-phosphate as a cofactor.

The protein resides in the cytoplasm. It carries out the reaction (6R)-5,10-methylene-5,6,7,8-tetrahydrofolate + glycine + H2O = (6S)-5,6,7,8-tetrahydrofolate + L-serine. The protein operates within one-carbon metabolism; tetrahydrofolate interconversion. It functions in the pathway amino-acid biosynthesis; glycine biosynthesis; glycine from L-serine: step 1/1. Functionally, catalyzes the reversible interconversion of serine and glycine with tetrahydrofolate (THF) serving as the one-carbon carrier. This reaction serves as the major source of one-carbon groups required for the biosynthesis of purines, thymidylate, methionine, and other important biomolecules. Also exhibits THF-independent aldolase activity toward beta-hydroxyamino acids, producing glycine and aldehydes, via a retro-aldol mechanism. This is Serine hydroxymethyltransferase from Bacillus cereus (strain ATCC 10987 / NRS 248).